Reading from the N-terminus, the 207-residue chain is Outer-membrane lipoprotein LolB (207 aa).

The N-terminal stretch at 1–21 (MPMRKRHFYRLLPLASLLLAA) is a signal peptide. C22 carries the N-palmitoyl cysteine lipid modification. A lipid anchor (S-diacylglycerol cysteine) is attached at C22.

Belongs to the LolB family. In terms of assembly, monomer.

Its subcellular location is the cell outer membrane. Plays a critical role in the incorporation of lipoproteins in the outer membrane after they are released by the LolA protein. The protein is Outer-membrane lipoprotein LolB of Yersinia pestis bv. Antiqua (strain Antiqua).